The following is a 164-amino-acid chain: Pyruvoyl-dependent arginine decarboxylase (164 aa).

Pyruvic acid (Ser) is present on Ser-52.

Belongs to the PdaD family. Pyruvate is required as a cofactor.

It carries out the reaction L-arginine + H(+) = agmatine + CO2. This chain is Pyruvoyl-dependent arginine decarboxylase, found in Methanococcus maripaludis (strain C6 / ATCC BAA-1332).